Reading from the N-terminus, the 321-residue chain is Ribose-phosphate pyrophosphokinase (321 aa).

Residues 44 to 46 (DGE) and 103 to 104 (RQ) contribute to the ATP site. Mg(2+) contacts are provided by His137 and Asp179. Lys202 is a catalytic residue. D-ribose 5-phosphate is bound by residues Arg204, Asp228, and 232–236 (DTAGT).

It belongs to the ribose-phosphate pyrophosphokinase family. Class I subfamily. As to quaternary structure, homohexamer. Requires Mg(2+) as cofactor.

It localises to the cytoplasm. It catalyses the reaction D-ribose 5-phosphate + ATP = 5-phospho-alpha-D-ribose 1-diphosphate + AMP + H(+). It participates in metabolic intermediate biosynthesis; 5-phospho-alpha-D-ribose 1-diphosphate biosynthesis; 5-phospho-alpha-D-ribose 1-diphosphate from D-ribose 5-phosphate (route I): step 1/1. Its function is as follows. Involved in the biosynthesis of the central metabolite phospho-alpha-D-ribosyl-1-pyrophosphate (PRPP) via the transfer of pyrophosphoryl group from ATP to 1-hydroxyl of ribose-5-phosphate (Rib-5-P). This chain is Ribose-phosphate pyrophosphokinase, found in Staphylococcus aureus (strain Mu50 / ATCC 700699).